The chain runs to 945 residues: Leucine--tRNA ligase (945 aa).

A 'HIGH' region motif is present at residues 43–53; it reads PYPNGAVHIGH. The short motif at 638–642 is the 'KMSKS' region element; that stretch reads KMSKS. Position 641 (Lys641) interacts with ATP.

Belongs to the class-I aminoacyl-tRNA synthetase family.

The protein localises to the cytoplasm. It catalyses the reaction tRNA(Leu) + L-leucine + ATP = L-leucyl-tRNA(Leu) + AMP + diphosphate. The sequence is that of Leucine--tRNA ligase from Pyrobaculum islandicum (strain DSM 4184 / JCM 9189 / GEO3).